The primary structure comprises 674 residues: MNHSNQMHHDNHESHNHHSGHAHHHGNFKVKFFVSLIFAIPIILLSPLMGINLPFQFTFPGSEWVVLILSTILFFYGGKPFLSGGKDEIATKKPGMMTLVALGISVAYIYSLYAFYMNNFSSATGHTMDFFWELATLILIMLLGHWIEMNAVGNAGDALKKMAELLPNSAIKVMDNGQREEVKISDIMTDDIVEVKAGESIPTDGIIVQGQTSIDESLVTGESKKVQKNQNDNVIGGSINGSGTIQVKVTAVGEDGYLSQVMGLVNQAQNDKSSAELLSDKVAGYLFYFAVIVGVISFIVWMLIQNDVDFALERLVTVLVIACPHALGLAIPLVTARSTSIGAHNGLIIKNRESVEIAQHIDYVMMDKTGTLTEGNFSVNHYESFKNDLSNDTILSLFASLESQSNHPLAISIVDFAKSKNVSFTNPQDVNNIPGVGLEGLIDNKTYKITNVSYLDKHKLNYDDDLFTKLAQQGNSISYLIEDQQVIGMIAQGDQIKESSKQMVADLLSRNITPVMLTGDNNEVAHAVAKELGISDVHAQLMPEDKESIIKDYQSNGNKVMMVGDGINDAPSLIRADIGIAIGAGTDVAVDSGDIILVKSNPSDIVHFLTLSNNTMRKMVQNLWWGAGYNIVAVPLAAGALAFVGLILSPAVGAILMSLSTVIVAINAFTLKLK.

The tract at residues 1-22 is disordered; that stretch reads MNHSNQMHHDNHESHNHHSGHA. Positions 7–16 are enriched in basic and acidic residues; the sequence is MHHDNHESHN. The next 6 membrane-spanning stretches (helical) occupy residues 32–52, 57–77, 95–115, 127–147, 284–304, and 315–335; these read FFVS…MGIN, FTFP…FFYG, GMMT…LYAF, TMDF…GHWI, GYLF…WMLI, and LVTV…PLVT. The 4-aspartylphosphate intermediate role is filled by D367. Residues D565 and D569 each coordinate Mg(2+). The next 2 membrane-spanning stretches (helical) occupy residues 623-645 and 649-671; these read LWWG…AFVG and SPAV…AFTL.

This sequence belongs to the cation transport ATPase (P-type) (TC 3.A.3) family. Type IB subfamily.

The protein localises to the cell membrane. The catalysed reaction is Cu(+)(in) + ATP + H2O = Cu(+)(out) + ADP + phosphate + H(+). Functionally, involved in copper transport. This is Probable copper-transporting P-type ATPase B (copB) from Staphylococcus epidermidis (strain ATCC 12228 / FDA PCI 1200).